Here is a 160-residue protein sequence, read N- to C-terminus: MRCPRCHHNNSRVIDSRQADDGRAIRRRRECENCSYRFTTFERIEAAPLLVIKKNGDREEFNRDKILRGLIRSAEKRPVAMEQMVQIVDNVENRVRSLGENEVSTTLIGEYVMEDLVNLDEIAYIRFASVYRQFKDMSVFLKELQDIVDKAKSSSPDSEN.

The segment at 3-34 (CPRCHHNNSRVIDSRQADDGRAIRRRRECENC) is a zinc-finger region. One can recognise an ATP-cone domain in the interval 49–139 (LLVIKKNGDR…VYRQFKDMSV (91 aa)).

This sequence belongs to the NrdR family. Zn(2+) serves as cofactor.

In terms of biological role, negatively regulates transcription of bacterial ribonucleotide reductase nrd genes and operons by binding to NrdR-boxes. This is Transcriptional repressor NrdR from Enterococcus faecalis (strain ATCC 700802 / V583).